The chain runs to 475 residues: Ribulose bisphosphate carboxylase large chain (475 aa).

The propeptide occupies 1-2 (MS). Position 3 is an N-acetylproline (P3). K14 is subject to N6,N6,N6-trimethyllysine. 2 residues coordinate substrate: N123 and T173. Catalysis depends on K175, which acts as the Proton acceptor. K177 contributes to the substrate binding site. Positions 201, 203, and 204 each coordinate Mg(2+). Position 201 is an N6-carboxylysine (K201). Residue H294 is the Proton acceptor of the active site. Substrate-binding residues include R295, H327, and S379.

The protein belongs to the RuBisCO large chain family. Type I subfamily. In terms of assembly, heterohexadecamer of 8 large chains and 8 small chains; disulfide-linked. The disulfide link is formed within the large subunit homodimers. The cofactor is Mg(2+). The disulfide bond which can form in the large chain dimeric partners within the hexadecamer appears to be associated with oxidative stress and protein turnover.

It localises to the plastid. The protein resides in the chloroplast. It catalyses the reaction 2 (2R)-3-phosphoglycerate + 2 H(+) = D-ribulose 1,5-bisphosphate + CO2 + H2O. It carries out the reaction D-ribulose 1,5-bisphosphate + O2 = 2-phosphoglycolate + (2R)-3-phosphoglycerate + 2 H(+). In terms of biological role, ruBisCO catalyzes two reactions: the carboxylation of D-ribulose 1,5-bisphosphate, the primary event in carbon dioxide fixation, as well as the oxidative fragmentation of the pentose substrate in the photorespiration process. Both reactions occur simultaneously and in competition at the same active site. In Calycanthus floridus var. glaucus (Eastern sweetshrub), this protein is Ribulose bisphosphate carboxylase large chain.